The chain runs to 211 residues: Urease accessory protein UreG (211 aa).

11–18 (GPVGAGKT) contributes to the GTP binding site.

This sequence belongs to the SIMIBI class G3E GTPase family. UreG subfamily. In terms of assembly, homodimer. UreD, UreF and UreG form a complex that acts as a GTP-hydrolysis-dependent molecular chaperone, activating the urease apoprotein by helping to assemble the nickel containing metallocenter of UreC. The UreE protein probably delivers the nickel.

The protein resides in the cytoplasm. Its function is as follows. Facilitates the functional incorporation of the urease nickel metallocenter. This process requires GTP hydrolysis, probably effectuated by UreG. The protein is Urease accessory protein UreG of Actinobacillus pleuropneumoniae serotype 5b (strain L20).